The sequence spans 169 residues: Allophycocyanin subunit beta-18 (169 aa).

Asn72 is subject to N4-methylasparagine. Cys82 contributes to the (2R,3E)-phycocyanobilin binding site.

Belongs to the phycobiliprotein family. Heterodimer of an alpha and a beta chain. Contains one covalently linked bilin chromophore.

The protein resides in the plastid. It is found in the chloroplast thylakoid membrane. In terms of biological role, light-harvesting photosynthetic bile pigment-protein from the phycobiliprotein complex. Allophycocyanin has a maximum absorption at approximately 650 nanometers. The polypeptide is Allophycocyanin subunit beta-18 (apcF) (Pyropia yezoensis (Susabi-nori)).